The following is a 108-amino-acid chain: Malonate decarboxylase acyl carrier protein (108 aa).

Serine 35 carries the post-translational modification O-(phosphoribosyl dephospho-coenzyme A)serine.

The protein belongs to the MdcC family. Post-translationally, covalently binds the prosthetic group of malonate decarboxylase.

It localises to the cytoplasm. Its function is as follows. Subunit of malonate decarboxylase, it is an acyl carrier protein to which acetyl and malonyl thioester residues are bound via a 2'-(5''-phosphoribosyl)-3'-dephospho-CoA prosthetic group and turn over during the catalytic mechanism. The sequence is that of Malonate decarboxylase acyl carrier protein from Burkholderia cepacia (Pseudomonas cepacia).